Reading from the N-terminus, the 249-residue chain is DNA repair protein RecO (249 aa).

It belongs to the RecO family.

Functionally, involved in DNA repair and RecF pathway recombination. The polypeptide is DNA repair protein RecO (Sinorhizobium medicae (strain WSM419) (Ensifer medicae)).